The sequence spans 151 residues: Monooxygenase nsrQ (151 aa).

It belongs to the avfA family.

The protein operates within secondary metabolite biosynthesis. Functionally, monooxygenase; part of the gene cluster that mediates the biosynthesis of the tetrahydroxanthone dimer neosartorin, which exhibits antibacterial activity. The two different monomeric units appear to be synthesized by the same set of enzymes, among which the Baeyer-Villiger monooxygenase nsrF is the key enzyme for the divergence of the biosynthetic routes. The pathway begins with the synthesis of atrochrysone thioester by the polyketide synthase nsrB. The atrochrysone carboxyl ACP thioesterase nsrC then breaks the thioester bond and releases the atrochrysone carboxylic acid from AacuL. Atrochrysone carboxylic acid is decarboxylated by the decarboxylase nsrE, and oxidized by the anthrone oxygenase nsrD to yield emodin. Emodin is then reduced to emodin hydroquinone by the oxidoreductase nsrR. A-ring reduction by the short chain dehydrogenase nsrJ, dehydration by the scytalone dehydratase-like protein nsrI and probable spontaneous re-oxidation, results in overall deoxygenation to chrysophanol. The Baeyer-Villiger monooxygenase nsrF accepts chrysophanol as a substrate to insert one oxygen atom at two different positions to yield the precursors of both monomric units. NsrF is promiscuous/flexible in interacting with the 2 (non methylated and methylated) aromatic rings of chrysophanol, thus diverging the biosynthetic pathway at this point. After the hydrolysis of the lactones, methylesterification by the methyltransferase nsrG yields respectively moniliphenone and 2,2',6'-trihydroxy-4-methyl-6-methoxya-cyldiphenylmethanone. The next steps are the hydroxylation by the FAD-dependent monooxygenase nsrK, followed by isomerization by the monooxygenase nsrQ. The short chain dehydrogenase/reductase nsrO then catalyzes the C-5 ketoreduction to give the xanthone skeleton of blennolide C and 5-acetylblennolide A. The acetyltransferase nsrL has a strict substrate specificity and uses only blennolide A but not blennolide C to yield 5-acetylblennolide A as the single-acetylated product. In the final step of the biosynthesis, the heterodimerization of the 2 xanthones, blennolide C and 5-acetylblennolide A, is catalyzed by the cytochrome P450 monooxygenase nsrP. NsrP can utilize at least three different xanthones as its substrates to perform the dimerization reaction. The polypeptide is Monooxygenase nsrQ (Aspergillus novofumigatus (strain IBT 16806)).